Consider the following 1710-residue polypeptide: Latrophilin Cirl (1710 aa).

The Extracellular segment spans residues 1–767 (MLPTILSISY…LFTMFDGNMR (767 aa)). The SUEL-type lectin domain maps to 25–114 (ACEGKKLTIE…KYLEAHYQCI (90 aa)). N-linked (GlcNAc...) asparagine glycosylation is present at asparagine 142. Residues 183-304 (QHTAVTHSTP…SGSVVPGNGS (122 aa)) are disordered. 2 stretches are compositionally biased toward polar residues: residues 185 to 198 (TAVT…STTA) and 256 to 265 (NATSPSNTRI). Asparagine 256 carries an N-linked (GlcNAc...) asparagine glycan. Low complexity-rich tracts occupy residues 275–285 (DDGTLLTTKSS) and 295–304 (SGSVVPGNGS). Asparagine 302 and asparagine 341 each carry an N-linked (GlcNAc...) asparagine glycan. A disordered region spans residues 376–400 (YDEYDDDPSSTTPATSSADCLHNSS). Residues 384-394 (SSTTPATSSAD) are compositionally biased toward low complexity. Residues asparagine 398, asparagine 655, asparagine 703, and asparagine 730 are each glycosylated (N-linked (GlcNAc...) asparagine). One can recognise a GAIN-B domain in the interval 561-754 (RSVVQKVKNI…AILMDVVDEH (194 aa)). 2 disulfides stabilise this stretch: cysteine 709/cysteine 736 and cysteine 724/cysteine 738. The interval 709–754 (CVFWNYIDHAWSANGCSLESTNRTHSVCSCNHLTNFAILMDVVDEH) is GPS. A helical membrane pass occupies residues 768–788 (IFIYISIGICVVFIVIALLTL). Residues 789-801 (KLFNGVFVKSART) lie on the Cytoplasmic side of the membrane. A helical transmembrane segment spans residues 802 to 822 (SIYTSIYLCLLAIELLFLLGI). Over 823-828 (EQTETS) the chain is Extracellular. Residues 829-849 (IFCGFITIFLHCAILSGTAWF) traverse the membrane as a helical segment. The Cytoplasmic segment spans residues 850–875 (CYEAFHSYSTLTSDELLLEVDQTPKV). The helical transmembrane segment at 876–896 (NCYYLLSYGLSLSVVAISLVI) threads the bilayer. The Extracellular portion of the chain corresponds to 897-920 (DPSTYTQNDYCVLMEANALFYATF). Residues 921–941 (VMPVLVFFVAAIGYTFLSWII) traverse the membrane as a helical segment. Over 942–968 (MCRKSRTGLKTKEHTRLASVRFDIRCS) the chain is Cytoplasmic. Residues 969 to 989 (FVFLLLLSAVWCSAYFYLRGA) form a helical membrane-spanning segment. Topologically, residues 990 to 999 (KMDDDTADVY) are extracellular. A helical membrane pass occupies residues 1000–1020 (GYCFICFNTLLGLYIFVFHCI). Residues 1021 to 1710 (QNEKIRREYR…VRCYLEPLAK (690 aa)) are Cytoplasmic-facing. Residues serine 1156, serine 1253, serine 1260, serine 1329, and serine 1330 each carry the phosphoserine modification. Residues 1234–1259 (KPNSGQHGKKKRGAGGVPASPSGSLH) are disordered. Disordered stretches follow at residues 1452-1540 (GGGS…SDER) and 1568-1690 (DYGA…QQRH). Residues 1458–1483 (GGSVSSRSQQQQLKKQQQQQSLAQQR) are compositionally biased toward low complexity. Acidic residues-rich tracts occupy residues 1491 to 1505 (DDDD…EEAT) and 1515 to 1528 (CDED…DLED). Positions 1638-1650 (QTPAQKRQQLQKL) are enriched in polar residues. Residues 1651 to 1672 (SPQSTTSSSSHTSHSNPNPHPH) are compositionally biased toward low complexity. The segment covering 1673–1689 (QLTHPHPHQHPPHHQQR) has biased composition (basic residues).

Belongs to the G-protein coupled receptor 2 family. LN-TM7 subfamily. In terms of assembly, forms a heterodimer, consisting of a large extracellular region non-covalently linked to a seven-transmembrane moiety. In terms of processing, proteolytically cleaved into 2 subunits, an extracellular subunit and a seven-transmembrane subunit.

The protein resides in the cell membrane. The polypeptide is Latrophilin Cirl (Drosophila erecta (Fruit fly)).